Reading from the N-terminus, the 196-residue chain is Phosphoheptose isomerase (196 aa).

The 161-residue stretch at 36–196 (MVACLMNEGK…AVDYMLLGGD (161 aa)) folds into the SIS domain. 51–53 (NGG) lines the substrate pocket. The Zn(2+) site is built by His60 and Glu64. Substrate is bound by residues Glu64, 93-94 (ND), 119-121 (STS), Ser124, and Gln174. Residues Gln174 and His182 each contribute to the Zn(2+) site.

This sequence belongs to the SIS family. GmhA subfamily. Homotetramer. Zn(2+) is required as a cofactor.

The protein resides in the cytoplasm. It catalyses the reaction 2 D-sedoheptulose 7-phosphate = D-glycero-alpha-D-manno-heptose 7-phosphate + D-glycero-beta-D-manno-heptose 7-phosphate. Its pathway is carbohydrate biosynthesis; D-glycero-D-manno-heptose 7-phosphate biosynthesis; D-glycero-alpha-D-manno-heptose 7-phosphate and D-glycero-beta-D-manno-heptose 7-phosphate from sedoheptulose 7-phosphate: step 1/1. Catalyzes the isomerization of sedoheptulose 7-phosphate in D-glycero-D-manno-heptose 7-phosphate. In Laribacter hongkongensis (strain HLHK9), this protein is Phosphoheptose isomerase.